A 102-amino-acid chain; its full sequence is Small ribosomal subunit protein uS10 (102 aa).

Belongs to the universal ribosomal protein uS10 family. Part of the 30S ribosomal subunit.

Functionally, involved in the binding of tRNA to the ribosomes. The protein is Small ribosomal subunit protein uS10 of Thermosipho africanus (strain TCF52B).